Consider the following 333-residue polypeptide: 5-formaminoimidazole-4-carboxamide-1-(beta)-D-ribofuranosyl 5'-monophosphate synthetase (333 aa).

Residues histidine 10 and serine 74 each coordinate 5-amino-1-(5-phospho-beta-D-ribosyl)imidazole-4-carboxamide. Residues 95-324 (RNLFAWESNQ…ISREIRLALN (230 aa)) enclose the ATP-grasp domain. Residues 125 to 185 (VEDV…VPMY) and glutamate 207 contribute to the ATP site. A 5-amino-1-(5-phospho-beta-D-ribosyl)imidazole-4-carboxamide-binding site is contributed by asparagine 230. Mg(2+) is bound by residues glutamate 269 and glutamate 282.

Belongs to the phosphohexose mutase family. Mg(2+) serves as cofactor. The cofactor is Mn(2+).

It catalyses the reaction 5-amino-1-(5-phospho-beta-D-ribosyl)imidazole-4-carboxamide + formate + ATP = 5-formamido-1-(5-phospho-D-ribosyl)imidazole-4-carboxamide + ADP + phosphate. The protein operates within purine metabolism; IMP biosynthesis via de novo pathway; 5-formamido-1-(5-phospho-D-ribosyl)imidazole-4-carboxamide from 5-amino-1-(5-phospho-D-ribosyl)imidazole-4-carboxamide (formate route): step 1/1. In terms of biological role, catalyzes the ATP- and formate-dependent formylation of 5-aminoimidazole-4-carboxamide-1-beta-d-ribofuranosyl 5'-monophosphate (AICAR) to 5-formaminoimidazole-4-carboxamide-1-beta-d-ribofuranosyl 5'-monophosphate (FAICAR) in the absence of folates. In Sulfolobus acidocaldarius (strain ATCC 33909 / DSM 639 / JCM 8929 / NBRC 15157 / NCIMB 11770), this protein is 5-formaminoimidazole-4-carboxamide-1-(beta)-D-ribofuranosyl 5'-monophosphate synthetase.